The chain runs to 1257 residues: Endochitinase A (1257 aa).

The signal sequence occupies residues 1 to 21 (MVFKPLTIAAAIAGLTPFVSA). Residues 28–339 (SNVAVYYGQG…DVIKDILVAV (312 aa)) form the GH18 domain. The Proton donor role is filled by glutamate 175. Disordered regions lie at residues 364–429 (TPVA…STPV), 595–980 (TPAA…LAPI), and 1141–1174 (DALTASPSGSQPAGESSPGQSAPTAPASTAPTTT). Positions 595-696 (TPAASSSPAV…STPVRSTSSV (102 aa)) are enriched in low complexity. The span at 700 to 715 (KSSSAPVIPKPSSTVI) shows a compositional bias: polar residues. Positions 716-935 (ATFTSSSGSL…ASGSGAQDST (220 aa)) are enriched in low complexity. An N-linked (GlcNAc...) asparagine glycan is attached at asparagine 825. Positions 940–964 (HASTLSPSYSTPLASASGQTGSPTT) are enriched in polar residues. An N-linked (GlcNAc...) asparagine glycan is attached at asparagine 973. The segment covering 1145-1154 (ASPSGSQPAG) has biased composition (polar residues). The span at 1156-1174 (SSPGQSAPTAPASTAPTTT) shows a compositional bias: low complexity. Residue glycine 1231 is the site of GPI-anchor amidated glycine attachment. The propeptide at 1232 to 1257 (AASRVSRLQHGAGAVSAFALFLLAAI) is removed in mature form.

The protein belongs to the glycosyl hydrolase 18 family. Chitinase class III subfamily. In terms of processing, O-glycosylated.

The protein resides in the cell membrane. It localises to the secreted. Its subcellular location is the cell wall. The catalysed reaction is Random endo-hydrolysis of N-acetyl-beta-D-glucosaminide (1-&gt;4)-beta-linkages in chitin and chitodextrins.. Functionally, GPI-anchored chitinase involved in the degradation of chitin, a component of the cell walls of fungi and exoskeletal elements of some animals (including worms and arthropods). Required to reshape the cell wall at the sites where cell wall remodeling and/or cell wall maturation actively take place such as sites of conidia formation. The sequence is that of Endochitinase A (ctcA) from Aspergillus niger (strain ATCC MYA-4892 / CBS 513.88 / FGSC A1513).